The primary structure comprises 880 residues: Translation initiation factor IF-2 (880 aa).

The disordered stretch occupies residues 259–281 (KNREEARAVGRSSKSQSKRKSST). One can recognise a tr-type G domain in the interval 379–548 (SRAPVVTIMG…LLQAEVLELK (170 aa)). The G1 stretch occupies residues 388-395 (GHVDHGKT). GTP is bound at residue 388 to 395 (GHVDHGKT). A G2 region spans residues 413 to 417 (GITQH). The interval 434–437 (DTPG) is G3. Residues 434-438 (DTPGH) and 488-491 (NKID) contribute to the GTP site. Residues 488 to 491 (NKID) are G4. Positions 524–526 (SAK) are G5.

It belongs to the TRAFAC class translation factor GTPase superfamily. Classic translation factor GTPase family. IF-2 subfamily.

The protein resides in the cytoplasm. One of the essential components for the initiation of protein synthesis. Protects formylmethionyl-tRNA from spontaneous hydrolysis and promotes its binding to the 30S ribosomal subunits. Also involved in the hydrolysis of GTP during the formation of the 70S ribosomal complex. This Baumannia cicadellinicola subsp. Homalodisca coagulata protein is Translation initiation factor IF-2.